The sequence spans 475 residues: Nucleoporin-like protein amo1 (475 aa).

The C3H1-type zinc-finger motif lies at 1–25 (MVVCKYFLQNRCRYGTNCKNQHTVP). Residues 165–182 (DKSTSNSTVTSNQFNKPT) are compositionally biased toward polar residues. Disordered stretches follow at residues 165–208 (DKST…DIFG) and 220–252 (NASPFSQNTSSNSFTGSNPVQNNPSSFGSSSFG). Over residues 183-204 (QNSPFNSFSNNNNSFNNNQQAN) the composition is skewed to low complexity. Residues 220–242 (NASPFSQNTSSNSFTGSNPVQNN) show a composition bias toward polar residues. Residues 243–252 (PSSFGSSSFG) are compositionally biased toward low complexity.

It is found in the nucleus. In terms of biological role, involved in the cell polarity process where it is required for the correct termination of microtubule growth at the cell ends during interphase. In Schizosaccharomyces pombe (strain 972 / ATCC 24843) (Fission yeast), this protein is Nucleoporin-like protein amo1 (amo1).